We begin with the raw amino-acid sequence, 1248 residues long: Ankyrin repeat and sterile alpha motif domain-containing protein 1B (1248 aa).

ANK repeat units follow at residues 2–31 (GKDQELLEAARTGNVALVEKLLSGRKGGIL), 58–87 (SGYTALHHAALNGHKDIVLKLLQYEASTNV), 91–120 (KGYFPIHLAAWKGDVEIVKILIHHGPSHSR), 127–156 (ENETALHCAAQYGHSEVVAVLLEELTDPTI), 160–189 (KLETPLDLAALYGRLRVVKMIISAHPNLMS), 193–222 (RKHTPLHLAARNGHKAVVQVLLEAGMDVSC), and 225–254 (EKGSALHEAALFGKVDVVRVLLETGIDANI). A disordered region spans residues 296–322 (EPVQEDATQETHISSPVESPSQKTKSE). Residues 305–322 (ETHISSPVESPSQKTKSE) show a composition bias toward polar residues. Ser309, Ser310, Ser314, Ser353, and Ser364 each carry phosphoserine. Disordered stretches follow at residues 367-400 (ELGKNGSQSVRTSSTINLSPGEVEEEDDDENTCG), 474-514 (APSP…PDTA), and 558-623 (SFTA…ENPF). Residues 371–384 (NGSQSVRTSSTINL) are compositionally biased toward polar residues. The segment covering 388 to 397 (EVEEEDDDEN) has biased composition (acidic residues). Thr503 carries the phosphothreonine modification. Residues Ser507 and Ser510 each carry the phosphoserine modification. Residues 558-575 (SFTASPPASPPTSSVGTT) are compositionally biased toward low complexity. A compositionally biased stretch (basic and acidic residues) spans 577-601 (VKNEGTNHTDDLSRQDDNDPPKEYD). Position 738 is a phosphoserine (Ser738). Residues 749 to 777 (EKTSRVNWSESSTAEHSSKGNSERTPSFT) form a disordered region. Residues 753-763 (RVNWSESSTAE) are compositionally biased toward polar residues. Position 773 is a phosphothreonine (Thr773). The residue at position 775 (Ser775) is a Phosphoserine. SAM domains are found at residues 810–876 (CPVQ…LPKM) and 884–949 (YHPT…RLHD). Tyr901 is modified (phosphotyrosine). The short motif at 935-938 (HRKR) is the Nuclear localization signal element. Residues 944 to 989 (GDRLHDDPPQKPPRSITLREPSGNHTPPQLSPSLSQSTYTTGGSLD) are disordered. Positions 969–984 (TPPQLSPSLSQSTYTT) are enriched in low complexity. At Ser974 the chain carries Phosphoserine. A Phosphotyrosine modification is found at Tyr1007. The region spanning 1056 to 1213 (IFQSCDYKAF…SFENKPSKPI (158 aa)) is the PID domain. A disordered region spans residues 1197 to 1248 (HSSTLPESFENKPSKPIPKPRVSIRKSVDLLHASHTGQEPSERHTEEALRKF). Basic and acidic residues predominate over residues 1236–1248 (PSERHTEEALRKF).

In terms of assembly, isoform 3 interacts with DLG4. Interacts with EPHA8. Isoform 2 interacts with COIL. Isoform 4 interacts with APP and EPHA8. Isoform 6 interacts with EPHA8. Isoform 3 nuclear translocation requires an NMDAR-dependent proteolytic cleavage. As to expression, highly expressed in marrow from patients with pre-B ALL associated with the t(1;19) translocation. Strongly expressed in brain and testis. Expressed in fetal brain. Isoform 4 is highly expressed in brain (at protein level). Isoform 6 is expressed in brain and several cancer cell lines.

It localises to the cytoplasm. Its subcellular location is the nucleus. The protein resides in the postsynaptic density. It is found in the cell projection. The protein localises to the dendritic spine. It localises to the cajal body. Its function is as follows. Isoform 2 may participate in the regulation of nucleoplasmic coilin protein interactions in neuronal and transformed cells. Functionally, isoform 3 can regulate global protein synthesis by altering nucleolar numbers. In terms of biological role, isoform 4 may play a role as a modulator of APP processing. Overexpression can down-regulate APP processing. This Homo sapiens (Human) protein is Ankyrin repeat and sterile alpha motif domain-containing protein 1B (ANKS1B).